The chain runs to 163 residues: Nucleotide-binding protein PM1656 (163 aa).

The protein belongs to the YajQ family.

Its function is as follows. Nucleotide-binding protein. This chain is Nucleotide-binding protein PM1656, found in Pasteurella multocida (strain Pm70).